The sequence spans 697 residues: Polyribonucleotide nucleotidyltransferase (697 aa).

Residues Asp488 and Asp494 each coordinate Mg(2+). Positions 555 to 614 constitute a KH domain; that stretch reads PTFEVITINPDKIRDVIGKGGATIRQITEETKAAIDIEDNGTVRVFGETKAAAKAAIAKI. Residues 624–692 form the S1 motif domain; sequence GKIYDGKVIR…NRGRIKLTMK (69 aa).

The protein belongs to the polyribonucleotide nucleotidyltransferase family. As to quaternary structure, component of the RNA degradosome, which is a multiprotein complex involved in RNA processing and mRNA degradation. Mg(2+) serves as cofactor.

Its subcellular location is the cytoplasm. It catalyses the reaction RNA(n+1) + phosphate = RNA(n) + a ribonucleoside 5'-diphosphate. Its function is as follows. Involved in mRNA degradation. Catalyzes the phosphorolysis of single-stranded polyribonucleotides processively in the 3'- to 5'-direction. The sequence is that of Polyribonucleotide nucleotidyltransferase from Acinetobacter baumannii (strain AB307-0294).